A 117-amino-acid polypeptide reads, in one-letter code: Hydrogenase maturation factor HypA (117 aa).

Ni(2+) is bound at residue H2. 4 residues coordinate Zn(2+): C73, C76, C89, and C92.

The protein belongs to the HypA/HybF family.

Involved in the maturation of [NiFe] hydrogenases. Required for nickel insertion into the metal center of the hydrogenase. The polypeptide is Hydrogenase maturation factor HypA (Shewanella baltica (strain OS223)).